The following is a 195-amino-acid chain: Kiwa protein KwaA (195 aa).

3 helical membrane passes run 10-30 (GLYILSLAMLFVFIIILTAKI), 46-66 (LVLTNIVPIVCFVFFLFSIYF), and 117-137 (IAYLLLVVVIGIIFIKTDKYY).

The protein resides in the cell inner membrane. Its function is as follows. Component of antiviral defense system Kiwa, composed of KwaA and KwaB. Expression of Kiwa in E.coli (strain MG1655) confers resistance to phages lambda and SECphi18. The protein is Kiwa protein KwaA of Escherichia coli O55:H7 (strain RM12579 / EPEC).